We begin with the raw amino-acid sequence, 123 residues long: MRIAGVDLPSQKKLEVALTYLYGIGKTLAKEILEACQLSPDLRVRDVNDEQSMRLRQYIEQKYLIESDLKRVESMNIKRLMDIGCYRGRRHRALLPVRGQRTRSNARTRRGAKKTVAGKKLAK.

Residues 99–123 (GQRTRSNARTRRGAKKTVAGKKLAK) form a disordered region. Over residues 100-123 (QRTRSNARTRRGAKKTVAGKKLAK) the composition is skewed to basic residues.

It belongs to the universal ribosomal protein uS13 family. Part of the 30S ribosomal subunit.

The protein resides in the plastid. It localises to the chloroplast. In terms of biological role, located at the top of the head of the 30S subunit, it contacts several helices of the 16S rRNA. This Cyanidioschyzon merolae (strain NIES-3377 / 10D) (Unicellular red alga) protein is Small ribosomal subunit protein uS13c.